The following is a 333-amino-acid chain: DNA-directed RNA polymerase subunit alpha (333 aa).

An alpha N-terminal domain (alpha-NTD) region spans residues 1–227; it reads MRKIKVAPFM…VMNKQLSVFN (227 aa). The interval 247–333 is alpha C-terminal domain (alpha-CTD); sequence ELKPFLAAVD…LVKKLEQLKA (87 aa).

Belongs to the RNA polymerase alpha chain family. Homodimer. The RNAP catalytic core consists of 2 alpha, 1 beta, 1 beta' and 1 omega subunit. When a sigma factor is associated with the core the holoenzyme is formed, which can initiate transcription.

The enzyme catalyses RNA(n) + a ribonucleoside 5'-triphosphate = RNA(n+1) + diphosphate. In terms of biological role, DNA-dependent RNA polymerase catalyzes the transcription of DNA into RNA using the four ribonucleoside triphosphates as substrates. The chain is DNA-directed RNA polymerase subunit alpha from Sulfurovum sp. (strain NBC37-1).